The chain runs to 92 residues: Small ribosomal subunit protein uS19 (92 aa).

It belongs to the universal ribosomal protein uS19 family.

Functionally, protein S19 forms a complex with S13 that binds strongly to the 16S ribosomal RNA. In Hyphomonas neptunium (strain ATCC 15444), this protein is Small ribosomal subunit protein uS19.